The primary structure comprises 167 residues: Epithelial membrane protein 2 (167 aa).

Residues 1–21 (MLVLLAFIIVFHITSAALLLV) traverse the membrane as a helical segment. Residues N44, N47, and N52 are each glycosylated (N-linked (GlcNAc...) asparagine). A run of 3 helical transmembrane segments spans residues 67–87 (TMIL…LQLF), 95–115 (FVLT…AASI), and 143–163 (FILA…YLIL).

The protein belongs to the PMP-22/EMP/MP20 family. Interacts with PTK2; regulates PTK2 activation and localization. Interacts with ITGB3; regulates the levels of the heterodimer ITGA5-ITGB3 integrin surface expression. Interacts with P2RX7 (via C-terminus). Interacts with ITGB1; the interaction may be direct or indirect and ITGB1 has a heterodimer form.

The protein localises to the golgi apparatus membrane. It is found in the cell membrane. Its subcellular location is the apical cell membrane. It localises to the membrane raft. The protein resides in the cytoplasm. The protein localises to the nucleus. It is found in the perinuclear region. Functionally, functions as a key regulator of cell membrane composition by regulating protein surface expression. Also, plays a role in regulation of processes including cell migration, cell proliferation, cell contraction and cell adhesion. Regulates transepithelial migration of neutrophils into the alveolar lumen, potentially via mediation of cell surface expression of adhesion markers and lipid raft formation. Negatively regulates caveolae formation by reducing CAV1 expression and CAV1 amount by increasing lysosomal degradation. Facilitates surface trafficking and the formation of lipid rafts bearing GPI-anchor proteins. Regulates surface expression of MHC1 and ICAM1 proteins increasing susceptibility to T-cell mediated cytotoxicity. Regulates the plasma membrane expression of the integrin heterodimers ITGA6-ITGB1, ITGA5-ITGB3 and ITGA5-ITGB1 resulting in modulation of cell-matrix adhesion. Also regulates many processes through PTK2. Regulates blood vessel endothelial cell migration and angiogenesis by regulating VEGF protein expression through PTK2 activation. Regulates cell migration and cell contraction through PTK2 and SRC activation. Regulates focal adhesion density, F-actin conformation and cell adhesion capacity through interaction with PTK2. Positively regulates cell proliferation. Plays a role during cell death and cell blebbing. Promotes angiogenesis and vasculogenesis through induction of VEGFA via a HIF1A-dependent pathway. Also plays a role in embryo implantation by regulating surface trafficking of integrin heterodimer ITGA5-ITGB3. Plays a role in placental angiogenesis and uterine natural killer cell regulation at the maternal-fetal placental interface, however not required in the maternal tissues for a viable pregnancy. Involved in the early stages of embryogenic development and cardiogenesis, potentially via regulation of epithelial-mesenchymal transition timing. May play a role in glomerular filtration. The chain is Epithelial membrane protein 2 (EMP2) from Bos taurus (Bovine).